The primary structure comprises 102 residues: UPF0147 protein MTH_1407 (102 aa).

This sequence belongs to the UPF0147 family.

The sequence is that of UPF0147 protein MTH_1407 from Methanothermobacter thermautotrophicus (strain ATCC 29096 / DSM 1053 / JCM 10044 / NBRC 100330 / Delta H) (Methanobacterium thermoautotrophicum).